Here is a 113-residue protein sequence, read N- to C-terminus: UPF0342 protein spyM18_0873 (113 aa).

Belongs to the UPF0342 family.

In Streptococcus pyogenes serotype M18 (strain MGAS8232), this protein is UPF0342 protein spyM18_0873.